A 445-amino-acid polypeptide reads, in one-letter code: Polyadenylate-binding protein RBP47A (445 aa).

Over residues 1-12 the composition is skewed to polar residues; that stretch reads MQTPNNNGSTDS. Disordered stretches follow at residues 1–45 and 93–117; these read MQTP…WQQQ and AAYQ…GGDD. The segment covering 22-35 has biased composition (pro residues); sequence TPPPPLQQSTPPPQ. Composition is skewed to low complexity over residues 36–45 and 93–108; these read QQQQQQWQQQ and AAYQ…SQQQ. RRM domains follow at residues 119–199, 213–292, and 327–399; these read KTLW…WASF, LSIF…IATP, and STIF…WGRS.

This sequence belongs to the polyadenylate-binding RBP47 family. Interacts with the poly(A) tail of mRNA in nucleus. Expressed in leaves, stems, flowers, and seedlings.

The protein resides in the nucleus. Its subcellular location is the cytoplasmic granule. Its function is as follows. Heterogeneous nuclear ribonucleoprotein (hnRNP)-protein binding the poly(A) tail of mRNA and probably involved in some steps of pre-mRNA maturation. In Arabidopsis thaliana (Mouse-ear cress), this protein is Polyadenylate-binding protein RBP47A (RBP47A).